Reading from the N-terminus, the 625-residue chain is Probable potassium transport system protein Kup (625 aa).

12 helical membrane passes run 13 to 33, 53 to 73, 103 to 123, 141 to 161, 172 to 192, 206 to 226, 250 to 270, 282 to 302, 340 to 360, 369 to 389, 400 to 420, and 422 to 442; these read TALAALGVVFGDIGTSPLYAL, ILSIIFWCLMLIISIKYVAIV, IYMIAIGFIGASLFFGDGIIT, VFDPFIMPIAIAIIVTLFLVQ, FGPITLVWFLSLGILGIHSVI, AIQFIYHHPIMTFFVMGAVVL, WFFVVLPCLVLNYAGQGALLL, LLVPQWALYPMIIMATMATVI, IYVPFLNWLLLIAIIILILIF, AYGLAVTLTMLCDTILVAVFI, VLLLIIPFFILESVLVGATSL, and ILSGGWVPLLIGAIAVTILMT.

The protein belongs to the HAK/KUP transporter (TC 2.A.72) family.

It localises to the cell inner membrane. It carries out the reaction K(+)(in) + H(+)(in) = K(+)(out) + H(+)(out). Functionally, transport of potassium into the cell. Likely operates as a K(+):H(+) symporter. This is Probable potassium transport system protein Kup from Acinetobacter baumannii (strain AYE).